The primary structure comprises 136 residues: Urease subunit beta (136 aa).

Residues 112-136 (ENDEYAGVFGDNGTENVNKKGGKRS) are disordered.

This sequence belongs to the urease beta subunit family. As to quaternary structure, heterotrimer of UreA (gamma), UreB (beta) and UreC (alpha) subunits. Three heterotrimers associate to form the active enzyme.

It is found in the cytoplasm. It carries out the reaction urea + 2 H2O + H(+) = hydrogencarbonate + 2 NH4(+). The protein operates within nitrogen metabolism; urea degradation; CO(2) and NH(3) from urea (urease route): step 1/1. This Staphylococcus aureus (strain MRSA252) protein is Urease subunit beta.